The following is a 432-amino-acid chain: MLFKKDRKQETAYFSDSNGQQKNRIQLTNKHADVKKQLKMVRLGDAELYVLEQLQPLIQENIVNIVDAFYKNLDHESSLMDIINDHSSVDRLKQTLKRHIQEMFAGVIDDEFIEKRNRIASIHLRIGLLPKWYMGAFQELLLSMIDIYEASITNQQELLKAIKATTKILNLEQQLVLEAFQSEYNQTRDEQEEKKNLLHQKIQETSGSIANLFSETSRSVQELVDKSEGISQASKAGTVTSSTVEEKSIGGKKELEVQQKQMNKIDTSLVQIEKEMVKLDEIAQQIEKIFGIVTGIAEQTNLLSLNASIESARAGEHGKGFAVVANEVRKLSEDTKKTVSTVSELVNNTNTQINIVSKHIKDVNELVSESKEKMTQINRLFDEIVHSMKISKEQSGKIDVDLQAFLGGLQEVSRAVSHVAASVDSLVILTEE.

A Methyl-accepting transducer domain is found at 184 to 420; that stretch reads YNQTRDEQEE…EVSRAVSHVA (237 aa).

This sequence belongs to the methyl-accepting chemotaxis (MCP) protein family. Homotetramer.

Functionally, heme-containing signal transducer responsible for aerotaxis, the migratory response toward or away from oxygen. In Bacillus subtilis (strain 168), this protein is Heme-based aerotactic transducer HemAT (hemAT).